Reading from the N-terminus, the 462-residue chain is Chromosomal replication initiator protein DnaA (462 aa).

The tract at residues 1-84 (MAVSLWQQCI…RFDIGSRPSA (84 aa)) is domain I, interacts with DnaA modulators. A domain II region spans residues 84–125 (APRPVQATAAVERPKFEQNTKPAKTSFNVNSPEPAMAANHRS). The interval 126–342 (NINRTYQFEN…GALNRVIANA (217 aa)) is domain III, AAA+ region. G170, G172, K173, and T174 together coordinate ATP. The tract at residues 343 to 462 (NFTGRPITID…YANLIRTLSS (120 aa)) is domain IV, binds dsDNA.

This sequence belongs to the DnaA family. In terms of assembly, oligomerizes as a right-handed, spiral filament on DNA at oriC.

It localises to the cytoplasm. Functionally, plays an essential role in the initiation and regulation of chromosomal replication. ATP-DnaA binds to the origin of replication (oriC) to initiate formation of the DNA replication initiation complex once per cell cycle. Binds the DnaA box (a 9 base pair repeat at the origin) and separates the double-stranded (ds)DNA. Forms a right-handed helical filament on oriC DNA; dsDNA binds to the exterior of the filament while single-stranded (ss)DNA is stabiized in the filament's interior. The ATP-DnaA-oriC complex binds and stabilizes one strand of the AT-rich DNA unwinding element (DUE), permitting loading of DNA polymerase. After initiation quickly degrades to an ADP-DnaA complex that is not apt for DNA replication. Binds acidic phospholipids. This chain is Chromosomal replication initiator protein DnaA, found in Shewanella sediminis (strain HAW-EB3).